Here is a 350-residue protein sequence, read N- to C-terminus: Salicylate decarboxylase (350 aa).

Belongs to the metallo-dependent hydrolases superfamily. Homotetramer.

It carries out the reaction salicylate + H(+) = phenol + CO2. Its activity is regulated as follows. Inhibited by AgNO(3), HgCl(2), p-chloromercuribenzoic acid and NiCl(2). Its function is as follows. Reversibly catalyzes the regioselective carboxylation of phenol to form salicylic acid. Involved in a pathway for the degradation of salicylate via phenol. Also catalyzes the decarboxylation of beta-resorcylic acid (2,4-dihydroxybenzoic acid) into resorcinol (1,3-dihydroxybenzene), gamma-resorcylic acid (2,6-dihydroxybenzoic acid) into resorcinol, 2,3-dihydroxybenzoic acid into catechol (1,2-dihydroxybenzene), and 4-aminosalicylic acid into 3-aminophenol. The polypeptide is Salicylate decarboxylase (Cutaneotrichosporon moniliiforme (Yeast)).